The sequence spans 53 residues: ATP synthase protein 8 (53 aa).

The helical transmembrane segment at 5 to 25 threads the bilayer; it reads APISWLTLFFVFSITLVIFNI.

This sequence belongs to the ATPase protein 8 family. F-type ATPases have 2 components, CF(1) - the catalytic core - and CF(0) - the membrane proton channel.

It is found in the mitochondrion membrane. Mitochondrial membrane ATP synthase (F(1)F(O) ATP synthase or Complex V) produces ATP from ADP in the presence of a proton gradient across the membrane which is generated by electron transport complexes of the respiratory chain. F-type ATPases consist of two structural domains, F(1) - containing the extramembraneous catalytic core and F(0) - containing the membrane proton channel, linked together by a central stalk and a peripheral stalk. During catalysis, ATP synthesis in the catalytic domain of F(1) is coupled via a rotary mechanism of the central stalk subunits to proton translocation. Part of the complex F(0) domain. Minor subunit located with subunit a in the membrane. This is ATP synthase protein 8 from Aedes aegypti (Yellowfever mosquito).